The following is a 363-amino-acid chain: Peptide chain release factor 1 (363 aa).

The residue at position 237 (Gln237) is an N5-methylglutamine.

The protein belongs to the prokaryotic/mitochondrial release factor family. Methylated by PrmC. Methylation increases the termination efficiency of RF1.

The protein localises to the cytoplasm. Peptide chain release factor 1 directs the termination of translation in response to the peptide chain termination codons UAG and UAA. The chain is Peptide chain release factor 1 from Hydrogenovibrio crunogenus (strain DSM 25203 / XCL-2) (Thiomicrospira crunogena).